Consider the following 175-residue polypeptide: Nucleoside triphosphate/diphosphate phosphatase (175 aa).

Arg-23 functions as the Proton donor in the catalytic mechanism. Mg(2+) is bound by residues Asn-87, Asp-103, Asp-105, Asp-107, Asp-120, and Glu-123.

This sequence belongs to the Ntdp family. The cofactor is Mg(2+).

It carries out the reaction a ribonucleoside 5'-triphosphate + H2O = a ribonucleoside 5'-diphosphate + phosphate + H(+). The enzyme catalyses a ribonucleoside 5'-diphosphate + H2O = a ribonucleoside 5'-phosphate + phosphate + H(+). In terms of biological role, has nucleoside phosphatase activity towards nucleoside triphosphates and nucleoside diphosphates. The polypeptide is Nucleoside triphosphate/diphosphate phosphatase (Listeria monocytogenes serotype 4b (strain CLIP80459)).